Reading from the N-terminus, the 147-residue chain is Large ribosomal subunit protein uL13 (147 aa).

It belongs to the universal ribosomal protein uL13 family. In terms of assembly, part of the 50S ribosomal subunit.

In terms of biological role, this protein is one of the early assembly proteins of the 50S ribosomal subunit, although it is not seen to bind rRNA by itself. It is important during the early stages of 50S assembly. This is Large ribosomal subunit protein uL13 from Pseudarthrobacter chlorophenolicus (strain ATCC 700700 / DSM 12829 / CIP 107037 / JCM 12360 / KCTC 9906 / NCIMB 13794 / A6) (Arthrobacter chlorophenolicus).